Here is a 643-residue protein sequence, read N- to C-terminus: 1-deoxy-D-xylulose-5-phosphate synthase (643 aa).

Residues histidine 78 and 119-121 (AHS) contribute to the thiamine diphosphate site. Aspartate 150 is a binding site for Mg(2+). Thiamine diphosphate-binding positions include 151–152 (GS), asparagine 179, tyrosine 288, and glutamate 370. Position 179 (asparagine 179) interacts with Mg(2+).

The protein belongs to the transketolase family. DXPS subfamily. In terms of assembly, homodimer. Requires Mg(2+) as cofactor. It depends on thiamine diphosphate as a cofactor.

It carries out the reaction D-glyceraldehyde 3-phosphate + pyruvate + H(+) = 1-deoxy-D-xylulose 5-phosphate + CO2. It participates in metabolic intermediate biosynthesis; 1-deoxy-D-xylulose 5-phosphate biosynthesis; 1-deoxy-D-xylulose 5-phosphate from D-glyceraldehyde 3-phosphate and pyruvate: step 1/1. Its function is as follows. Catalyzes the acyloin condensation reaction between C atoms 2 and 3 of pyruvate and glyceraldehyde 3-phosphate to yield 1-deoxy-D-xylulose-5-phosphate (DXP). This is 1-deoxy-D-xylulose-5-phosphate synthase from Brucella ovis (strain ATCC 25840 / 63/290 / NCTC 10512).